The sequence spans 795 residues: Histone acetyltransferase KAT2A (795 aa).

The segment covering Met1–Gln18 has biased composition (polar residues). The tract at residues Met1–Arg55 is disordered. Residues Ser19–Ser34 are compositionally biased toward low complexity. The 154-residue stretch at Val461–Asn614 folds into the N-acetyltransferase domain. The active-site Proton donor/acceptor is Glu533. Acetyl-CoA-binding positions include Cys537–Val539, Gln544–Thr550, and Tyr575. Succinyl-CoA is bound by residues Cys537–Val539, Gln544–Thr550, and Tyr575. Residues Leu597–Ala606 form a loop 3 region. A Bromo domain is found at Lys686–Ala790.

The protein belongs to the acetyltransferase family. GCN5 subfamily.

The protein localises to the nucleus. It localises to the chromosome. The protein resides in the cytoplasm. It is found in the cytoskeleton. Its subcellular location is the microtubule organizing center. The protein localises to the centrosome. It catalyses the reaction L-lysyl-[histone] + acetyl-CoA = N(6)-acetyl-L-lysyl-[histone] + CoA + H(+). The enzyme catalyses L-lysyl-[protein] + acetyl-CoA = N(6)-acetyl-L-lysyl-[protein] + CoA + H(+). It carries out the reaction succinyl-CoA + L-lysyl-[protein] = N(6)-succinyl-L-lysyl-[protein] + CoA + H(+). The catalysed reaction is glutaryl-CoA + L-lysyl-[protein] = N(6)-glutaryl-L-lysyl-[protein] + CoA + H(+). In terms of biological role, protein lysine acyltransferase that can act as a acetyltransferase, glutaryltransferasesucc, succinyltransferase or malonyltransferase, depending on the context. Acts as a histone lysine succinyltransferase: catalyzes succinylation of histone H3 on 'Lys-79' (H3K79succ), with a maximum frequency around the transcription start sites of genes. Succinylation of histones gives a specific tag for epigenetic transcription activation. Association with the 2-oxoglutarate dehydrogenase complex, which provides succinyl-CoA, is required for histone succinylation. In different complexes, functions either as an acetyltransferase (HAT) or as a succinyltransferase: in the SAGA and ATAC complexes, acts as a histone acetyltransferase. Has significant histone acetyltransferase activity with core histones, but not with nucleosome core particles. Has a a strong preference for acetylation of H3 at 'Lys-9' (H3K9ac). Acetylation of histones gives a specific tag for epigenetic transcription activation. Also acetylates non-histone proteins, such as tbx5. Involved in heart and limb development by mediating acetylation of tbx5. Together with kat2b, required for growth and differentiation of craniofacial cartilage and bone by regulating acetylation of histone H3 at 'Lys-9' (H3K9ac). Also acts as a histone glutaryltransferase: catalyzes glutarylation of histone H4 on 'Lys-91' (H4K91glu), a mark that destabilizes nucleosomes by promoting dissociation of the H2A-H2B dimers from nucleosomes. In Danio rerio (Zebrafish), this protein is Histone acetyltransferase KAT2A.